A 383-amino-acid chain; its full sequence is Ribosomal RNA large subunit methyltransferase G (383 aa).

Belongs to the methyltransferase superfamily. RlmG family.

The protein localises to the cytoplasm. It catalyses the reaction guanosine(1835) in 23S rRNA + S-adenosyl-L-methionine = N(2)-methylguanosine(1835) in 23S rRNA + S-adenosyl-L-homocysteine + H(+). In terms of biological role, specifically methylates the guanine in position 1835 (m2G1835) of 23S rRNA. The chain is Ribosomal RNA large subunit methyltransferase G from Shewanella denitrificans (strain OS217 / ATCC BAA-1090 / DSM 15013).